A 723-amino-acid chain; its full sequence is Polyribonucleotide nucleotidyltransferase (723 aa).

Mg(2+)-binding residues include Asp488 and Asp494. In terms of domain architecture, KH spans 555–614; that stretch reads PKIITLNIKPEKIKDVIGPGGKQINAIIDETGVKIDIEQDGTVYIASQDQAMNRKAIAII. Residues 624-692 form the S1 motif domain; the sequence is GEVYTGKVRR…QQGRVNLSRK (69 aa). The tract at residues 692-723 is disordered; it reads KALLEKKEQPEGDKKPQAEKKFYPKTKKPESK. Positions 693 to 723 are enriched in basic and acidic residues; the sequence is ALLEKKEQPEGDKKPQAEKKFYPKTKKPESK.

It belongs to the polyribonucleotide nucleotidyltransferase family. The cofactor is Mg(2+).

The protein resides in the cytoplasm. The catalysed reaction is RNA(n+1) + phosphate = RNA(n) + a ribonucleoside 5'-diphosphate. In terms of biological role, involved in mRNA degradation. Catalyzes the phosphorolysis of single-stranded polyribonucleotides processively in the 3'- to 5'-direction. The chain is Polyribonucleotide nucleotidyltransferase from Listeria monocytogenes serotype 4a (strain HCC23).